A 442-amino-acid polypeptide reads, in one-letter code: tRNA-2-methylthio-N(6)-dimethylallyladenosine synthase (442 aa).

Residues 3–120 form the MTTase N-terminal domain; the sequence is KKLYIETHGC…LPEMIDAARI (118 aa). 6 residues coordinate [4Fe-4S] cluster: Cys12, Cys49, Cys83, Cys157, Cys161, and Cys164. The region spanning 143-375 is the Radical SAM core domain; that stretch reads RIDGPSAYVS…QHRLNQQGFE (233 aa). The 65-residue stretch at 378 to 442 folds into the TRAM domain; the sequence is RQMVGSVQRI…PHSLRGSLIQ (65 aa).

Belongs to the methylthiotransferase family. MiaB subfamily. Monomer. It depends on [4Fe-4S] cluster as a cofactor.

The protein localises to the cytoplasm. The enzyme catalyses N(6)-dimethylallyladenosine(37) in tRNA + (sulfur carrier)-SH + AH2 + 2 S-adenosyl-L-methionine = 2-methylsulfanyl-N(6)-dimethylallyladenosine(37) in tRNA + (sulfur carrier)-H + 5'-deoxyadenosine + L-methionine + A + S-adenosyl-L-homocysteine + 2 H(+). In terms of biological role, catalyzes the methylthiolation of N6-(dimethylallyl)adenosine (i(6)A), leading to the formation of 2-methylthio-N6-(dimethylallyl)adenosine (ms(2)i(6)A) at position 37 in tRNAs that read codons beginning with uridine. The protein is tRNA-2-methylthio-N(6)-dimethylallyladenosine synthase of Pseudomonas fluorescens (strain Pf0-1).